The following is a 165-amino-acid chain: Ribosome maturation factor RimM (165 aa).

In terms of domain architecture, PRC barrel spans 89 to 161; it reads EADTHYVVDL…KIVIKPVRQW (73 aa).

It belongs to the RimM family. Binds ribosomal protein uS19.

Its subcellular location is the cytoplasm. An accessory protein needed during the final step in the assembly of 30S ribosomal subunit, possibly for assembly of the head region. Essential for efficient processing of 16S rRNA. May be needed both before and after RbfA during the maturation of 16S rRNA. It has affinity for free ribosomal 30S subunits but not for 70S ribosomes. The protein is Ribosome maturation factor RimM of Clostridium botulinum (strain Eklund 17B / Type B).